The following is a 215-amino-acid chain: MHIVLIGGPGTGKGTQAELLSKKYMLPVISTGHILRKISTKKTLFGEKIKNIINSGKLVPDTIIIKIITNEILHKNYTNGFILDGFPRTIKQAKNLKNTNIQIDYVFEFILPTKLIFKRIQTRTINPITGTIYNNVIQKNSELKNLKINTLKSRLDDQYPIILKRLKEHKKNIVYLKDFYINEQKHKSLKYHEINSQNTIKNVNIEIKKILENKL.

10 to 15 (GTGKGT) is a binding site for ATP. An NMP region spans residues 30–59 (STGHILRKISTKKTLFGEKIKNIINSGKLV). Residues Thr-31, Arg-36, 57 to 59 (KLV), 85 to 88 (GFPR), and Gln-92 contribute to the AMP site. The tract at residues 122 to 157 (TRTINPITGTIYNNVIQKNSELKNLKINTLKSRLDD) is LID. ATP-binding positions include Arg-123 and 132-133 (IY). AMP contacts are provided by Arg-154 and Arg-165. ATP is bound at residue Asn-198.

It belongs to the adenylate kinase family. Monomer.

It localises to the cytoplasm. It carries out the reaction AMP + ATP = 2 ADP. It functions in the pathway purine metabolism; AMP biosynthesis via salvage pathway; AMP from ADP: step 1/1. In terms of biological role, catalyzes the reversible transfer of the terminal phosphate group between ATP and AMP. Plays an important role in cellular energy homeostasis and in adenine nucleotide metabolism. The protein is Adenylate kinase of Buchnera aphidicola subsp. Baizongia pistaciae (strain Bp).